The primary structure comprises 140 residues: Nucleoside diphosphate kinase (140 aa).

ATP is bound by residues Lys-11, Phe-59, Arg-87, Thr-93, Arg-104, and Asn-114. The active-site Pros-phosphohistidine intermediate is His-117.

This sequence belongs to the NDK family. In terms of assembly, homotetramer. It depends on Mg(2+) as a cofactor.

It is found in the cytoplasm. It carries out the reaction a 2'-deoxyribonucleoside 5'-diphosphate + ATP = a 2'-deoxyribonucleoside 5'-triphosphate + ADP. It catalyses the reaction a ribonucleoside 5'-diphosphate + ATP = a ribonucleoside 5'-triphosphate + ADP. Its function is as follows. Major role in the synthesis of nucleoside triphosphates other than ATP. The ATP gamma phosphate is transferred to the NDP beta phosphate via a ping-pong mechanism, using a phosphorylated active-site intermediate. This Gluconacetobacter diazotrophicus (strain ATCC 49037 / DSM 5601 / CCUG 37298 / CIP 103539 / LMG 7603 / PAl5) protein is Nucleoside diphosphate kinase.